Reading from the N-terminus, the 639-residue chain is Kininogen-1 (639 aa).

A signal peptide spans 1-18 (MKLITILLLCSRLLPSLA). One can recognise a Cystatin kininogen-type 1 domain in the interval 28–132 (CNDESLFQAV…TQICNITPGK (105 aa)). Disulfide bonds link C28–C609, C83–C94, C107–C126, C142–C145, C206–C218, C229–C248, C264–C267, C328–C340, and C351–C370. The N-linked (GlcNAc...) asparagine glycan is linked to N82. Residues 151-254 (VDSPELGPVL…SDSCEFYPGD (104 aa)) form the Cystatin kininogen-type 2 domain. N-linked (GlcNAc...) asparagine glycans are attached at residues N169 and N205. The 104-residue stretch at 273–376 (VDSPELKEAL…TVKCKVLDMT (104 aa)) folds into the Cystatin kininogen-type 3 domain. The N-linked (GlcNAc...) asparagine glycan is linked to N294. S332 carries the post-translational modification Phosphoserine. 2 disordered regions span residues 438-462 (NHQG…GHGH) and 476-547 (GYDH…LNPP). Basic residues predominate over residues 482 to 502 (PVGHGHGQRHGHGHGHGHGRD). The segment covering 503–519 (KHTNKDKNNVKHTDQRR) has biased composition (basic and acidic residues). A compositionally biased stretch (polar residues) spans 522–537 (LTSSSEDNTTSTQIQG). N529 is a glycosylation site (N-linked (GlcNAc...) asparagine).

Post-translationally, bradykinin is released from kininogen by plasma kallikrein. Phosphorylated by FAM20C in the extracellular medium. In terms of processing, bradykinin is inactivated by ACE, which removes the dipeptide Arg-Phe from its C-terminus. Plasma.

It localises to the secreted. The protein resides in the extracellular space. In terms of biological role, kininogens are inhibitors of thiol proteases. HMW-kininogen plays an important role in blood coagulation by helping to position optimally prekallikrein and factor XI next to factor XII; HMW-kininogen inhibits the thrombin- and plasmin-induced aggregation of thrombocytes. LMW-kininogen inhibits the aggregation of thrombocytes. LMW-kininogen is in contrast to HMW-kininogen not involved in blood clotting. Functionally, the active peptide bradykinin is a potent vasodilatator that is released from HMW-kininogen shows a variety of physiological effects: (A) influence in smooth muscle contraction, (B) induction of hypotension, (C) natriuresis and diuresis, (D) decrease in blood glucose level, (E) it is a mediator of inflammation and causes (E1) increase in vascular permeability, (E2) stimulation of nociceptors (4E3) release of other mediators of inflammation (e.g. prostaglandins), (F) it has a cardioprotective effect (directly via bradykinin action, indirectly via endothelium-derived relaxing factor action). This chain is Kininogen-1 (Kng1), found in Rattus norvegicus (Rat).